Reading from the N-terminus, the 501-residue chain is Lysine--tRNA ligase (501 aa).

Mg(2+)-binding residues include glutamate 411 and glutamate 418.

The protein belongs to the class-II aminoacyl-tRNA synthetase family. In terms of assembly, homodimer. Mg(2+) serves as cofactor.

It localises to the cytoplasm. The enzyme catalyses tRNA(Lys) + L-lysine + ATP = L-lysyl-tRNA(Lys) + AMP + diphosphate. The chain is Lysine--tRNA ligase from Aliivibrio fischeri (strain ATCC 700601 / ES114) (Vibrio fischeri).